The primary structure comprises 249 residues: tRNA pseudouridine synthase A (249 aa).

The Nucleophile role is filled by D53. A substrate-binding site is contributed by Y111.

The protein belongs to the tRNA pseudouridine synthase TruA family. Homodimer.

The catalysed reaction is uridine(38/39/40) in tRNA = pseudouridine(38/39/40) in tRNA. Its function is as follows. Formation of pseudouridine at positions 38, 39 and 40 in the anticodon stem and loop of transfer RNAs. This is tRNA pseudouridine synthase A from Streptococcus suis (strain 98HAH33).